Here is a 127-residue protein sequence, read N- to C-terminus: MSNRKPYVREMTRTWWKDDPFYRFYMVREATILPLIFFTICLTFGLGCLVKGPEAWAGWLSFMSNPIVVVLNILALLGSLFHAQTFFSMMPQVMPITIKGKKLDKTIIVLAQWAAVAAISLFVLVLV.

3 consecutive transmembrane segments (helical) span residues 30–50, 67–87, and 107–127; these read ATIL…GCLV, IVVV…QTFF, and IIVL…LVLV.

Belongs to the FrdC family. Part of an enzyme complex containing four subunits: a flavoprotein (FrdA), an iron-sulfur protein (FrdB), and two hydrophobic anchor proteins (FrdC and FrdD).

The protein resides in the cell inner membrane. Its function is as follows. Anchors the catalytic components of the fumarate reductase complex to the cell membrane, binds quinones. The chain is Fumarate reductase subunit C from Photobacterium profundum (strain SS9).